The following is a 254-amino-acid chain: Methylthioribulose-1-phosphate dehydratase (254 aa).

Cysteine 110 contributes to the substrate binding site. Positions 127 and 129 each coordinate Zn(2+). The active-site Proton donor/acceptor is the glutamate 156. Residue histidine 212 coordinates Zn(2+).

This sequence belongs to the aldolase class II family. MtnB subfamily. It depends on Zn(2+) as a cofactor.

It is found in the cytoplasm. It catalyses the reaction 5-(methylsulfanyl)-D-ribulose 1-phosphate = 5-methylsulfanyl-2,3-dioxopentyl phosphate + H2O. It functions in the pathway amino-acid biosynthesis; L-methionine biosynthesis via salvage pathway; L-methionine from S-methyl-5-thio-alpha-D-ribose 1-phosphate: step 2/6. Its function is as follows. Catalyzes the dehydration of methylthioribulose-1-phosphate (MTRu-1-P) into 2,3-diketo-5-methylthiopentyl-1-phosphate (DK-MTP-1-P). This chain is Methylthioribulose-1-phosphate dehydratase, found in Talaromyces marneffei (strain ATCC 18224 / CBS 334.59 / QM 7333) (Penicillium marneffei).